The sequence spans 337 residues: Ribosomal RNA small subunit methyltransferase H (337 aa).

S-adenosyl-L-methionine-binding positions include 45–47, D64, F91, D120, and Q127; that span reads GGH.

Belongs to the methyltransferase superfamily. RsmH family.

The protein localises to the cytoplasm. It carries out the reaction cytidine(1402) in 16S rRNA + S-adenosyl-L-methionine = N(4)-methylcytidine(1402) in 16S rRNA + S-adenosyl-L-homocysteine + H(+). In terms of biological role, specifically methylates the N4 position of cytidine in position 1402 (C1402) of 16S rRNA. The chain is Ribosomal RNA small subunit methyltransferase H from Corynebacterium glutamicum (strain ATCC 13032 / DSM 20300 / JCM 1318 / BCRC 11384 / CCUG 27702 / LMG 3730 / NBRC 12168 / NCIMB 10025 / NRRL B-2784 / 534).